Here is a 230-residue protein sequence, read N- to C-terminus: MVKQERKIQTSSTKKEMPLSSSPSSSSSSSSSSSSSSCKNKNKKSKIKKYKGVRMRSWGSWVSEIRAPNQKTRIWLGSYSTAEAAARAYDVALLCLKGPQANLNFPTSSSSHHLLDNLLDENTLLSPKSIQRVAAQAANSFNHFAPTSSAVSSPSDHDHHHDDGMQSLMGSFVDNHVSLMDSTSSWYDDHNGMFLFDNGAPFNYSPQLNSTTMLDEYFYEDADIPLWSFN.

Basic and acidic residues predominate over residues 1–17; the sequence is MVKQERKIQTSSTKKEM. Residues 1 to 51 are disordered; it reads MVKQERKIQTSSTKKEMPLSSSPSSSSSSSSSSSSSSCKNKNKKSKIKKYK. The segment covering 20–39 has biased composition (low complexity); it reads SSSPSSSSSSSSSSSSSSCK. The segment covering 40-51 has biased composition (basic residues); that stretch reads NKNKKSKIKKYK. Positions 49–106 form a DNA-binding region, AP2/ERF; the sequence is KYKGVRMRSWGSWVSEIRAPNQKTRIWLGSYSTAEAAARAYDVALLCLKGPQANLNFP.

The protein belongs to the AP2/ERF transcription factor family. ERF subfamily. In terms of tissue distribution, expressed cotyledons, ovules and seeds of immature siliques.

The protein resides in the nucleus. Its function is as follows. Transcriptional activator involved in the regulation of plant development and tolerance to abiotic stresses. Involved in salt and osmotic stress response pathways. May be regulated by the stress-related genes RD29A, RD22, DREB1A or P5CS during stress response. Binds to the GCC-box pathogenesis-related promoter element. May be involved in the regulation of gene expression by stress factors and by components of stress signal transduction pathways. In Arabidopsis thaliana (Mouse-ear cress), this protein is Ethylene-responsive transcription factor ERF012 (ERF012).